The chain runs to 316 residues: L-lactate dehydrogenase 3 (316 aa).

Residues Val-16, Asp-37, Arg-42, and Tyr-68 each coordinate NAD(+). Arg-91 is a binding site for substrate. NAD(+) is bound by residues Ser-104, 121–123, and Thr-146; that span reads ASN. 123–126 contributes to the substrate binding site; the sequence is NPVD. 151–154 provides a ligand contact to substrate; that stretch reads DSSR. The beta-D-fructose 1,6-bisphosphate site is built by Arg-156 and His-171. His-178 serves as the catalytic Proton acceptor. A substrate-binding site is contributed by Thr-233.

The protein belongs to the LDH/MDH superfamily. LDH family. In terms of assembly, homotetramer.

The protein resides in the cytoplasm. It catalyses the reaction (S)-lactate + NAD(+) = pyruvate + NADH + H(+). It functions in the pathway fermentation; pyruvate fermentation to lactate; (S)-lactate from pyruvate: step 1/1. Allosterically activated by fructose 1,6-bisphosphate (FBP). In terms of biological role, catalyzes the conversion of lactate to pyruvate. The sequence is that of L-lactate dehydrogenase 3 from Bacillus anthracis.